Consider the following 249-residue polypeptide: MRYVIITGTSQGLGEAIATQLLEESTTVISISRRENKELTKLAEQYNSNCIFHSLDLQDVHNLETNFKEIISSIKEDNVSSIHLINNAGTVAPMKPIEKAESEQFITNVHINLLAPMILTSTFMKHTKEWKVDKRVINISSGAGKNPYFGWGAYCTTKAGVNMFTQCVATEEVEKEYPVKIVAFAPGVVDTNMQAQIRETAKEDFTNLDRFIALKEEGKLLSPEYVAKAIRNLLETEEFPQGEVIRIDE.

Residues I6, N87, Y154, K158, V189, and T191 each contribute to the NADP(+) site. Y154 functions as the Proton acceptor in the catalytic mechanism.

This sequence belongs to the short-chain dehydrogenases/reductases (SDR) family.

Its subcellular location is the cytoplasm. The catalysed reaction is (S)-benzoin + NADP(+) = benzil + NADPH + H(+). It catalyses the reaction 2-hydroxy-1-phenyl-1-propanone + NADP(+) = 1-phenyl-1,2-propanedione + NADPH + H(+). Inhibited by Cibacron blue 3GA, a general SDR family inhibitor. Its function is as follows. Reduces benzil stereospecifically to (S)-benzoin. Can also reduce 1-phenyl-1,2-propanedione, 1,4-naphthoquinone, 1-(4-methyl-phenyl)-2-phenyl-ethane-1,2-dione, 1-(4-fluoro-phenyl)-2-phenyl-ethane-1,2-dione, methyl benzoylformate and p-nitrobenzaldehyde in decreasing order. The sequence is that of Benzil reductase ((S)-benzoin forming) from Bacillus cereus.